Reading from the N-terminus, the 255-residue chain is Trypsin alpha-4 (255 aa).

An N-terminal signal peptide occupies residues 1-16; sequence MLKFVVLLCAISCALG. The propeptide at 17–30 is activation peptide; sequence AAVPEGMVPQLDGR. Positions 31–253 constitute a Peptidase S1 domain; sequence IVGGVATTIS…LRTWVVSAAS (223 aa). A disulfide bridge links Cys56 with Cys72. Active-site charge relay system residues include His71 and Asp116. 2 cysteine pairs are disulfide-bonded: Cys179-Cys196 and Cys205-Cys229. Ser209 acts as the Charge relay system in catalysis.

The protein belongs to the peptidase S1 family.

Its subcellular location is the secreted. It is found in the extracellular space. The catalysed reaction is Preferential cleavage: Arg-|-Xaa, Lys-|-Xaa.. This Lucilia cuprina (Green bottle fly) protein is Trypsin alpha-4.